Reading from the N-terminus, the 463-residue chain is Nitrogenase vanadium-iron protein beta chain (463 aa).

C20, C45, C104, and S142 together coordinate [8Fe-7S] cluster.

The protein belongs to the NifD/NifK/NifE/NifN family. Hexamer of two alpha, two beta, and two delta chains. [8Fe-7S] cluster serves as cofactor.

It carries out the reaction N2 + 8 reduced [2Fe-2S]-[ferredoxin] + 16 ATP + 16 H2O = H2 + 8 oxidized [2Fe-2S]-[ferredoxin] + 2 NH4(+) + 16 ADP + 16 phosphate + 6 H(+). Functionally, this vanadium-iron protein is part of the nitrogenase complex that catalyzes the key enzymatic reactions in nitrogen fixation. The chain is Nitrogenase vanadium-iron protein beta chain (vnfK) from Trichormus variabilis (strain ATCC 29413 / PCC 7937) (Anabaena variabilis).